A 171-amino-acid chain; its full sequence is Small ribosomal subunit protein mS25 (171 aa).

Belongs to the mitochondrion-specific ribosomal protein mS25 family. As to quaternary structure, component of the mitochondrial ribosome small subunit (28S) which comprises a 12S rRNA and about 30 distinct proteins.

It is found in the mitochondrion. In Rattus norvegicus (Rat), this protein is Small ribosomal subunit protein mS25 (Mrps25).